Reading from the N-terminus, the 30-residue chain is uncharacterized protein (30 aa).

An N-terminal signal peptide occupies residues 1-22 (MRFLFFLPPSFITSFLYLALYS).

This is an uncharacterized protein from Schizosaccharomyces pombe (strain 972 / ATCC 24843) (Fission yeast).